Here is a 321-residue protein sequence, read N- to C-terminus: Glucokinase (321 aa).

Position 8 to 13 (8 to 13 (GDVGGT)) interacts with ATP.

Belongs to the bacterial glucokinase family.

The protein resides in the cytoplasm. The catalysed reaction is D-glucose + ATP = D-glucose 6-phosphate + ADP + H(+). The protein is Glucokinase of Tolumonas auensis (strain DSM 9187 / NBRC 110442 / TA 4).